We begin with the raw amino-acid sequence, 453 residues long: Glucose N-acetyltransferase 1-B (453 aa).

The Cytoplasmic portion of the chain corresponds to 1 to 8 (MLKRKVRY). Residues 9-29 (LLLIVVVFTGIILSVEAIMRF) traverse the membrane as a helical; Signal-anchor for type II membrane protein segment. Residues 30-453 (QLNKNVDYYL…LESRAICQVN (424 aa)) lie on the Lumenal side of the membrane. N-linked (GlcNAc...) asparagine glycosylation is found at Asn-108, Asn-126, and Asn-176. The DXD signature appears at 187–189 (DND).

It belongs to the GNT1 family.

The protein resides in the golgi apparatus membrane. It localises to the vacuole membrane. Functionally, N-acetylglucosaminyltransferase involved in the Golgi-specific modification of N-linked glycans. The protein is Glucose N-acetyltransferase 1-B (GNT1-B) of Kluyveromyces lactis (strain ATCC 8585 / CBS 2359 / DSM 70799 / NBRC 1267 / NRRL Y-1140 / WM37) (Yeast).